Consider the following 396-residue polypeptide: Elongation factor Tu (396 aa).

Residues 10 to 206 (KPHVNVGTIG…ALDTYIPLPE (197 aa)) form the tr-type G domain. Residues 19–26 (GHVDHGKT) form a G1 region. Residue 19–26 (GHVDHGKT) coordinates GTP. Residue Thr26 coordinates Mg(2+). A G2 region spans residues 60-64 (GITIN). The segment at 81–84 (DCPG) is G3. Residues 81–85 (DCPGH) and 136–139 (NKCD) each bind GTP. Residues 136–139 (NKCD) form a G4 region. Residues 174–176 (SAK) are G5.

This sequence belongs to the TRAFAC class translation factor GTPase superfamily. Classic translation factor GTPase family. EF-Tu/EF-1A subfamily. In terms of assembly, monomer.

It is found in the cytoplasm. The enzyme catalyses GTP + H2O = GDP + phosphate + H(+). Functionally, GTP hydrolase that promotes the GTP-dependent binding of aminoacyl-tRNA to the A-site of ribosomes during protein biosynthesis. This chain is Elongation factor Tu, found in Polaromonas sp. (strain JS666 / ATCC BAA-500).